Here is a 380-residue protein sequence, read N- to C-terminus: Epoxyqueuosine reductase (380 aa).

The Proton donor role is filled by Asp-134. Residues 179–208 (PPDQPIEDQCGSCTKCIDICPTGALIQGGQ) enclose the 4Fe-4S ferredoxin-type 1 domain. 8 residues coordinate [4Fe-4S] cluster: Cys-188, Cys-191, Cys-194, Cys-198, Cys-214, Cys-240, Cys-243, and Cys-247. The 4Fe-4S ferredoxin-type 2 domain occupies 226–258 (PEEYRDKIGNRIYGCDTCQTVCPKNKGMDFHNH).

Belongs to the QueG family. As to quaternary structure, monomer. Cob(II)alamin serves as cofactor. [4Fe-4S] cluster is required as a cofactor.

It localises to the cytoplasm. The enzyme catalyses epoxyqueuosine(34) in tRNA + AH2 = queuosine(34) in tRNA + A + H2O. The protein operates within tRNA modification; tRNA-queuosine biosynthesis. Catalyzes the conversion of epoxyqueuosine (oQ) to queuosine (Q), which is a hypermodified base found in the wobble positions of tRNA(Asp), tRNA(Asn), tRNA(His) and tRNA(Tyr). The chain is Epoxyqueuosine reductase from Bacillus anthracis.